We begin with the raw amino-acid sequence, 131 residues long: Sec-independent protein translocase protein TatB (131 aa).

Residues 1–21 traverse the membrane as a helical segment; that stretch reads MFDISFAELVVVGIVALIVIG. 2 stretches are compositionally biased toward polar residues: residues 71-93 and 111-131; these read NSFENSVRSEINKIQETTETQSA and PVNTSETKTSSAPAEPRQPNS. A disordered region spans residues 71-131; sequence NSFENSVRSE…APAEPRQPNS (61 aa).

The protein belongs to the TatB family. In terms of assembly, the Tat system comprises two distinct complexes: a TatABC complex, containing multiple copies of TatA, TatB and TatC subunits, and a separate TatA complex, containing only TatA subunits. Substrates initially bind to the TatABC complex, which probably triggers association of the separate TatA complex to form the active translocon.

Its subcellular location is the cell inner membrane. Functionally, part of the twin-arginine translocation (Tat) system that transports large folded proteins containing a characteristic twin-arginine motif in their signal peptide across membranes. Together with TatC, TatB is part of a receptor directly interacting with Tat signal peptides. TatB may form an oligomeric binding site that transiently accommodates folded Tat precursor proteins before their translocation. The chain is Sec-independent protein translocase protein TatB from Nitrosomonas europaea (strain ATCC 19718 / CIP 103999 / KCTC 2705 / NBRC 14298).